We begin with the raw amino-acid sequence, 382 residues long: uncharacterized protein (382 aa).

Helical transmembrane passes span 8-28, 45-65, 75-95, 102-122, 131-151, 157-177, 204-224, 231-251, 270-290, 291-311, 325-345, and 349-369; these read VMLLLCGLLLLTLAIAVLNTL, MVSSSYFTGNLVGTLFTGYLI, YLASLIFAAGCVGLGVMVGFW, FIAGIGCAMIWVVVESALMCS, LLAAYMMVYYMGTFLGQLLVS, LLHVLPWVTGMILAGILPLLF, LGVNGCIISGIVLGSLYGLMP, GMANASIGFWMAVLVSAGILG, VQVFVVILGSIAMLTQAAMAP, ALFILGAAGFTLYPVAMAWAC, ALLLSYTVGSLLGPSFAAMLM, and SDNLLFIMIASVSFIYLLMLL.

It belongs to the major facilitator superfamily. YcaD (TC 2.A.1.26) family.

The protein resides in the cell inner membrane. This is an uncharacterized protein from Salmonella agona (strain SL483).